The chain runs to 255 residues: Serine/threonine-protein phosphatase PP1 (255 aa).

4 residues coordinate Mn(2+): Asp-2, His-4, Asp-30, and Asn-62. The active-site Proton donor is the His-63. 2 residues coordinate Mn(2+): His-111 and His-186.

This sequence belongs to the PPP phosphatase family. PP-1 subfamily. Mn(2+) is required as a cofactor.

It carries out the reaction O-phospho-L-seryl-[protein] + H2O = L-seryl-[protein] + phosphate. The enzyme catalyses O-phospho-L-threonyl-[protein] + H2O = L-threonyl-[protein] + phosphate. In Brassica napus (Rape), this protein is Serine/threonine-protein phosphatase PP1.